Consider the following 317-residue polypeptide: Methionyl-tRNA formyltransferase (317 aa).

(6S)-5,6,7,8-tetrahydrofolate is bound at residue 109-112 (SLLP).

Belongs to the Fmt family.

The catalysed reaction is L-methionyl-tRNA(fMet) + (6R)-10-formyltetrahydrofolate = N-formyl-L-methionyl-tRNA(fMet) + (6S)-5,6,7,8-tetrahydrofolate + H(+). Its function is as follows. Attaches a formyl group to the free amino group of methionyl-tRNA(fMet). The formyl group appears to play a dual role in the initiator identity of N-formylmethionyl-tRNA by promoting its recognition by IF2 and preventing the misappropriation of this tRNA by the elongation apparatus. The chain is Methionyl-tRNA formyltransferase from Halalkalibacterium halodurans (strain ATCC BAA-125 / DSM 18197 / FERM 7344 / JCM 9153 / C-125) (Bacillus halodurans).